Reading from the N-terminus, the 268-residue chain is Tryptophan synthase alpha chain (268 aa).

Catalysis depends on proton acceptor residues E49 and D60.

The protein belongs to the TrpA family. As to quaternary structure, tetramer of two alpha and two beta chains.

It carries out the reaction (1S,2R)-1-C-(indol-3-yl)glycerol 3-phosphate + L-serine = D-glyceraldehyde 3-phosphate + L-tryptophan + H2O. It participates in amino-acid biosynthesis; L-tryptophan biosynthesis; L-tryptophan from chorismate: step 5/5. Its function is as follows. The alpha subunit is responsible for the aldol cleavage of indoleglycerol phosphate to indole and glyceraldehyde 3-phosphate. The polypeptide is Tryptophan synthase alpha chain (Xanthomonas oryzae pv. oryzae (strain MAFF 311018)).